The primary structure comprises 598 residues: uncharacterized protein (598 aa).

The span at 1 to 23 shows a compositional bias: basic and acidic residues; that stretch reads MSHEGSRQARDRGVTRSKAEKAR. Disordered stretches follow at residues 1-32, 151-190, and 222-241; these read MSHEGSRQARDRGVTRSKAEKARPPTQPVPQV, FHNEEPGNPDQFLLGSSWDKESQKPTQPSEPSAEPKVTPR, and PSKESLRSTAEGERVYSPQS. Positions 225–235 are enriched in basic and acidic residues; sequence ESLRSTAEGER. Ser-238 and Ser-242 each carry phosphoserine. 2 disordered regions span residues 366–396 and 551–571; these read RRSQAGTATSACESQALSSRAPSKPHVSSPR and AEEGTPQAPEQQPIQTGVSKP. Composition is skewed to polar residues over residues 369 to 386 and 558 to 569; these read QAGTATSACESQALSSRA and APEQQPIQTGVS.

This is an uncharacterized protein from Mus musculus (Mouse).